The following is a 175-amino-acid chain: ATP-dependent protease subunit HslV (175 aa).

Threonine 2 is an active-site residue. The Na(+) site is built by glycine 158, cysteine 161, and threonine 164.

It belongs to the peptidase T1B family. HslV subfamily. A double ring-shaped homohexamer of HslV is capped on each side by a ring-shaped HslU homohexamer. The assembly of the HslU/HslV complex is dependent on binding of ATP.

The protein localises to the cytoplasm. It carries out the reaction ATP-dependent cleavage of peptide bonds with broad specificity.. With respect to regulation, allosterically activated by HslU binding. Functionally, protease subunit of a proteasome-like degradation complex believed to be a general protein degrading machinery. This is ATP-dependent protease subunit HslV from Histophilus somni (strain 129Pt) (Haemophilus somnus).